Here is a 478-residue protein sequence, read N- to C-terminus: Argininosuccinate synthase (478 aa).

ATP-binding positions include 17–25 (AFSGGLDTS) and alanine 43. Position 99 (tyrosine 99) interacts with L-citrulline. ATP-binding residues include glycine 129 and threonine 131. 3 residues coordinate L-aspartate: threonine 131, asparagine 135, and aspartate 136. L-citrulline is bound at residue asparagine 135. Aspartate 136 contacts ATP. L-citrulline contacts are provided by arginine 139 and serine 192. Residue aspartate 194 coordinates ATP. Positions 201, 203, and 280 each coordinate L-citrulline.

The protein belongs to the argininosuccinate synthase family. Type 2 subfamily. As to quaternary structure, homotetramer.

Its subcellular location is the cytoplasm. The catalysed reaction is L-citrulline + L-aspartate + ATP = 2-(N(omega)-L-arginino)succinate + AMP + diphosphate + H(+). Its pathway is amino-acid biosynthesis; L-arginine biosynthesis; L-arginine from L-ornithine and carbamoyl phosphate: step 2/3. In Leifsonia xyli subsp. xyli (strain CTCB07), this protein is Argininosuccinate synthase.